The chain runs to 474 residues: ATP synthase subunit beta (474 aa).

Residue 155-162 participates in ATP binding; the sequence is GGAGVGKT.

This sequence belongs to the ATPase alpha/beta chains family. In terms of assembly, F-type ATPases have 2 components, CF(1) - the catalytic core - and CF(0) - the membrane proton channel. CF(1) has five subunits: alpha(3), beta(3), gamma(1), delta(1), epsilon(1). CF(0) has three main subunits: a(1), b(2) and c(9-12). The alpha and beta chains form an alternating ring which encloses part of the gamma chain. CF(1) is attached to CF(0) by a central stalk formed by the gamma and epsilon chains, while a peripheral stalk is formed by the delta and b chains.

Its subcellular location is the cell inner membrane. The catalysed reaction is ATP + H2O + 4 H(+)(in) = ADP + phosphate + 5 H(+)(out). In terms of biological role, produces ATP from ADP in the presence of a proton gradient across the membrane. The catalytic sites are hosted primarily by the beta subunits. This is ATP synthase subunit beta from Sorangium cellulosum (strain So ce56) (Polyangium cellulosum (strain So ce56)).